The chain runs to 406 residues: Lysine-specific demethylase 8 (406 aa).

A compositionally biased stretch (basic and acidic residues) spans 143–152 (KAERSEEPFS). The tract at residues 143–162 (KAERSEEPFSKKRKHDCKSE) is disordered. In terms of domain architecture, JmjC spans 270-406 (DQVPELKEDI…LSFSVSFWWS (137 aa)). Residues His311 and Asp313 each contribute to the Fe cation site.

Requires Fe(2+) as cofactor.

The protein resides in the nucleus. The catalysed reaction is N(6),N(6)-dimethyl-L-lysyl(36)-[histone H3] + 2 2-oxoglutarate + 2 O2 = L-lysyl(36)-[histone H3] + 2 formaldehyde + 2 succinate + 2 CO2. In terms of biological role, histone demethylase required for G2/M phase cell cycle progression. Specifically demethylates dimethylated 'Lys-36' (H3K36me2) of histone H3, an epigenetic repressive mark, thereby acting as a transcription activator. May play a role in the regulation of the circadian clock. The sequence is that of Lysine-specific demethylase 8 (kdm8) from Danio rerio (Zebrafish).